We begin with the raw amino-acid sequence, 287 residues long: Homoserine kinase (287 aa).

ATP is bound at residue 78–88; it reads PLAHGLGSSSS.

This sequence belongs to the GHMP kinase family. Homoserine kinase subfamily.

The protein resides in the cytoplasm. It catalyses the reaction L-homoserine + ATP = O-phospho-L-homoserine + ADP + H(+). The protein operates within amino-acid biosynthesis; L-threonine biosynthesis; L-threonine from L-aspartate: step 4/5. Functionally, catalyzes the ATP-dependent phosphorylation of L-homoserine to L-homoserine phosphate. This is Homoserine kinase from Lactobacillus acidophilus (strain ATCC 700396 / NCK56 / N2 / NCFM).